The primary structure comprises 294 residues: Diaminopimelate epimerase (294 aa).

The substrate site is built by Asn-15, Gln-47, and Asn-67. The active-site Proton donor is Cys-76. Residues 77–78 (GN), Asn-163, Asn-197, and 215–216 (ER) contribute to the substrate site. Cys-224 (proton acceptor) is an active-site residue. Position 225-226 (225-226 (GS)) interacts with substrate.

The protein belongs to the diaminopimelate epimerase family. Homodimer.

It is found in the cytoplasm. The enzyme catalyses (2S,6S)-2,6-diaminopimelate = meso-2,6-diaminopimelate. The protein operates within amino-acid biosynthesis; L-lysine biosynthesis via DAP pathway; DL-2,6-diaminopimelate from LL-2,6-diaminopimelate: step 1/1. Functionally, catalyzes the stereoinversion of LL-2,6-diaminopimelate (L,L-DAP) to meso-diaminopimelate (meso-DAP), a precursor of L-lysine and an essential component of the bacterial peptidoglycan. This is Diaminopimelate epimerase from Mesorhizobium japonicum (strain LMG 29417 / CECT 9101 / MAFF 303099) (Mesorhizobium loti (strain MAFF 303099)).